The following is a 708-amino-acid chain: O-antigen chain terminator bifunctional methyltransferase/kinase WbdD (708 aa).

The methyltransferase stretch occupies residues 1–210 (MTKDLNTLVS…VPRPMYLVSN (210 aa)). Residues 16–17 (YQ), arginine 36, glycine 61, 82–87 (DFQQEN), 108–111 (GRIE), and leucine 128 contribute to the S-adenosyl-L-methionine site. Positions 211 to 459 (HRVLINDFNQ…AKLPSAEQQR (249 aa)) are kinase. ATP contacts are provided by residues proline 229, histidine 237, 241–243 (RRY), lysine 252, glutamate 274, 309–311 (EKL), methionine 358, and aspartate 369. The stretch at 485-594 (AGSEALRGQI…EIEKIHRSRS (110 aa)) forms a coiled coil. The required for membrane-binding stretch occupies residues 601 to 669 (YRYLGLQIHL…RLYRRMNPLP (69 aa)). Residues 687-708 (VMHPELLPPEVYEIYLKLTKNK) form a required for localizing WbdA to the membrane region.

The protein belongs to the WbdD family. In terms of assembly, homotrimer in solution. Interacts with WbdA.

The protein resides in the cell inner membrane. It catalyses the reaction 3-O-phospho-alpha-D-Man-(1-&gt;2)-alpha-D-Man-(1-&gt;2)-[alpha-D-Man-(1-&gt;3)-alpha-D-Man-(1-&gt;3)-alpha-D-Man-(1-&gt;2)-alpha-D-Man-(1-&gt;2)](n)-alpha-D-Man-(1-&gt;3)-alpha-D-Man-(1-&gt;3)-alpha-D-Man-(1-&gt;3)-alpha-D-GlcNAc-di-trans,octa-cis-undecaprenyl diphosphate + S-adenosyl-L-methionine = 3-O-methylphospho-alpha-D-Man-(1-&gt;2)-alpha-D-Man-(1-&gt;2)-[alpha-D-Man-(1-&gt;3)-alpha-D-Man-(1-&gt;3)-alpha-D-Man-(1-&gt;2)-alpha-D-Man-(1-&gt;2)](n)-alpha-D-Man-(1-&gt;3)-alpha-D-Man-(1-&gt;3)-alpha-D-Man-(1-&gt;3)-alpha-D-GlcNAc-di-trans,octa-cis-undecaprenyl diphosphate + S-adenosyl-L-homocysteine. The enzyme catalyses alpha-D-Man-(1-&gt;2)-alpha-D-Man-(1-&gt;2)-[alpha-D-Man-(1-&gt;3)-alpha-D-Man-(1-&gt;3)-alpha-D-Man-(1-&gt;2)-alpha-D-Man-(1-&gt;2)](n)-alpha-D-Man-(1-&gt;3)-alpha-D-Man-(1-&gt;3)-alpha-D-Man-(1-&gt;3)-alpha-D-GlcNAc-di-trans,octa-cis-undecaprenyl diphosphate + ATP = 3-O-phospho-alpha-D-Man-(1-&gt;2)-alpha-D-Man-(1-&gt;2)-[alpha-D-Man-(1-&gt;3)-alpha-D-Man-(1-&gt;3)-alpha-D-Man-(1-&gt;2)-alpha-D-Man-(1-&gt;2)](n)-alpha-D-Man-(1-&gt;3)-alpha-D-Man-(1-&gt;3)-alpha-D-Man-(1-&gt;3)-alpha-D-GlcNAc-di-trans,octa-cis-undecaprenyl diphosphate + ADP + H(+). Its pathway is bacterial outer membrane biogenesis; LPS O-antigen biosynthesis. Its function is as follows. Regulates the length of the LPS O-antigen polysaccharide chain. Stops the polymerization of the chain by phosphorylating and then methylating the phosphate on the terminal sugar. This terminal modification is essential for export of the O-antigen across the inner membrane. WbdD is also required for correct localization of the WbdA mannosyltransferase. The polypeptide is O-antigen chain terminator bifunctional methyltransferase/kinase WbdD (Escherichia coli).